Reading from the N-terminus, the 281-residue chain is Bifunctional protein FolD (281 aa).

NADP(+) is bound by residues 165–167, Thr192, and Val233; that span reads GRG.

Belongs to the tetrahydrofolate dehydrogenase/cyclohydrolase family. As to quaternary structure, homodimer.

The enzyme catalyses (6R)-5,10-methylene-5,6,7,8-tetrahydrofolate + NADP(+) = (6R)-5,10-methenyltetrahydrofolate + NADPH. It catalyses the reaction (6R)-5,10-methenyltetrahydrofolate + H2O = (6R)-10-formyltetrahydrofolate + H(+). Its pathway is one-carbon metabolism; tetrahydrofolate interconversion. Functionally, catalyzes the oxidation of 5,10-methylenetetrahydrofolate to 5,10-methenyltetrahydrofolate and then the hydrolysis of 5,10-methenyltetrahydrofolate to 10-formyltetrahydrofolate. This chain is Bifunctional protein FolD, found in Mycobacterium marinum (strain ATCC BAA-535 / M).